We begin with the raw amino-acid sequence, 25 residues long: Ocellatin-L2 (25 aa).

Leu-25 bears the Leucine amide mark.

It belongs to the frog skin active peptide (FSAP) family. Ocellatin subfamily. In terms of tissue distribution, expressed by the skin glands.

The protein resides in the secreted. Shows a low activity in stimulating insulin release from rat BRIN-BD11 beta cells, and acts without loss of integrity of the plasma membrane. Does not show antibacterial (E.coli and S.aureus). Does not show hemolytic activity against human erythrocytes. This is Ocellatin-L2 from Leptodactylus laticeps (Santa Fe frog).